Consider the following 83-residue polypeptide: Cytochrome b559 subunit alpha (83 aa).

Residues 22-36 form a helical membrane-spanning segment; the sequence is VIHAVTLPAIFLAGF. Residue His-24 coordinates heme.

Belongs to the PsbE/PsbF family. Heterodimer of an alpha subunit and a beta subunit. PSII is composed of 1 copy each of membrane proteins PsbA, PsbB, PsbC, PsbD, PsbE, PsbF, PsbH, PsbI, PsbJ, PsbK, PsbL, PsbM, PsbT, PsbX, PsbY, PsbZ, Psb30/Ycf12, peripheral proteins PsbO, CyanoQ (PsbQ), PsbU, PsbV and a large number of cofactors. It forms dimeric complexes. Requires heme b as cofactor.

Its subcellular location is the cellular thylakoid membrane. This b-type cytochrome is tightly associated with the reaction center of photosystem II (PSII). PSII is a light-driven water:plastoquinone oxidoreductase that uses light energy to abstract electrons from H(2)O, generating O(2) and a proton gradient subsequently used for ATP formation. It consists of a core antenna complex that captures photons, and an electron transfer chain that converts photonic excitation into a charge separation. This chain is Cytochrome b559 subunit alpha, found in Synechococcus sp. (strain RCC307).